A 410-amino-acid chain; its full sequence is MEQKPSKVECGSDPEESSTRSPDGKRKRKNGQCSLKTSMSGYIPSYLDKDEQCVVCGDKATGYHYRCITCEGCKGFFRRTIQKNLHPTYSCKYDSCCVIDKITRNQCQLCRFKKCIAVGMAMDLVLDDSKRVAKRKLIEQNRERRRKEEMIRSLQQRPEPTPEEWDLIHVATEAHRSTNAQGSHWKQRRKFLPDDIGQSPIVSMPDGDKVDLEAFSEFTKIITPAITRVVDFAKKLPMFSELPCEDQIILLKGCCMEIMSLRAAVRYDPESDTLTLSGEMAVKREQLKNGGLGVVSDAIFELGKSLSAFNLDDTEVALLQAVLLMSTDRSGLLCVDKIEKSQEAYLLAFEHYVNHRKHNIPHFWPKLLMKVTDLRMIGACHASRFLHMKVECPTELFPPLFLEVFEDQEV.

Residues 1-32 are disordered; sequence MEQKPSKVECGSDPEESSTRSPDGKRKRKNGQ. The segment at 1 to 52 is modulating; it reads MEQKPSKVECGSDPEESSTRSPDGKRKRKNGQCSLKTSMSGYIPSYLDKDEQ. Residues cysteine 53, cysteine 56, cysteine 70, cysteine 73, cysteine 91, cysteine 97, cysteine 107, and cysteine 110 each coordinate Zn(2+). 2 NR C4-type zinc fingers span residues 53–73 and 91–115; these read CVVC…CEGC and CKYD…FKKC. Positions 53 to 127 form a DNA-binding region, nuclear receptor; sequence CVVCGDKATG…VGMAMDLVLD (75 aa). Residues 163-407 form the NR LBD domain; it reads EEWDLIHVAT…PPLFLEVFED (245 aa). 3,3',5-triiodo-L-thyronine contacts are provided by arginine 228 and serine 277.

Belongs to the nuclear hormone receptor family. NR1 subfamily. In terms of assembly, binds DNA as a dimer; homodimer and heterodimer with RXRB. Interacts with NCOA3 and NCOA6 coactivators, leading to a strong increase of transcription of target genes. Probably interacts with SFPQ. Interacts with C1D. Interacts with AKAP13. Interacts with TP53INP2. Interacts with PER2. Interacts with TACC1. The interaction with isoform alpha-1, but not alpha-2, is decreased in the presence of thyroid hormone T3.

Its subcellular location is the nucleus. The protein localises to the cytoplasm. In terms of biological role, nuclear hormone receptor that can act as a repressor or activator of transcription. High affinity receptor for thyroid hormones, including triiodothyronine and thyroxine. This is Thyroid hormone receptor alpha (THRA) from Ovis aries (Sheep).